The following is a 276-amino-acid chain: uncharacterized protein (276 aa).

The active-site Proton donor is the tyrosine 47. Substrate is bound at residue histidine 110.

It belongs to the aldo/keto reductase family.

The protein localises to the cytoplasm. The protein resides in the nucleus. This is an uncharacterized protein from Schizosaccharomyces pombe (strain 972 / ATCC 24843) (Fission yeast).